A 465-amino-acid chain; its full sequence is Glutamate--tRNA ligase 2 (465 aa).

A 'HIGH' region motif is present at residues 8 to 18 (PSPTGLMHLGN). The short motif at 249–253 (PLSKR) is the 'KMSKS' region element. K252 provides a ligand contact to ATP.

It belongs to the class-I aminoacyl-tRNA synthetase family. Glutamate--tRNA ligase type 1 subfamily. As to quaternary structure, monomer.

The protein resides in the cytoplasm. It carries out the reaction tRNA(Glu) + L-glutamate + ATP = L-glutamyl-tRNA(Glu) + AMP + diphosphate. In terms of biological role, catalyzes the attachment of glutamate to tRNA(Glu) in a two-step reaction: glutamate is first activated by ATP to form Glu-AMP and then transferred to the acceptor end of tRNA(Glu). The chain is Glutamate--tRNA ligase 2 from Coxiella burnetii (strain RSA 331 / Henzerling II).